The chain runs to 95 residues: Small ribosomal subunit protein bS18 (95 aa).

This sequence belongs to the bacterial ribosomal protein bS18 family. Part of the 30S ribosomal subunit. Forms a tight heterodimer with protein bS6.

Its function is as follows. Binds as a heterodimer with protein bS6 to the central domain of the 16S rRNA, where it helps stabilize the platform of the 30S subunit. The protein is Small ribosomal subunit protein bS18 of Rickettsia peacockii (strain Rustic).